A 4646-amino-acid chain; its full sequence is Cytoplasmic dynein 1 heavy chain 1 (4646 aa).

N-acetylserine is present on S2. A stem region spans residues 53–1867; it reads EAALEEKSAL…SIQMANAKFN (1815 aa). S70 is subject to Phosphoserine. 3 coiled-coil regions span residues 181–202, 455–478, and 543–566; these read SVEK…NIEI, AHRK…QLRA, and TEAW…RITA. Residues 448-703 are interaction with DYNC1I2; sequence MVWRINPAHR…NTQEIFDDWA (256 aa). The tract at residues 651-802 is interaction with DYNC1LI2; sequence AKQIDRQLTA…EKVEERNTIS (152 aa). K1125 carries the post-translational modification N6-acetyllysine. Coiled coils occupy residues 1171–1252 and 1357–1373; these read TYVQ…AVES and RKLR…LKSF. Phosphoserine is present on S1230. 4 AAA regions span residues 1868-2099, 2180-2452, 2556-2805, and 2899-3168; these read YGFE…VLVS, EELK…LTRL, EVET…WVRG, and VFYE…GGRT. ATP is bound by residues 1906-1913 and 2224-2231; these read GPAGTGKT and GPSGSGKS. The tract at residues 2390 to 2411 is disordered; that stretch reads GEDEAQRRRKGKEDEGEEAASP. ATP is bound by residues 2595 to 2602 and 2937 to 2944; these read GPPGSGKT and GVSGAGKT. Coiled-coil stretches lie at residues 3189–3275, 3396–3500, and 3737–3800; these read EKRS…ADKQ, AIAQ…KNQM, and EFQL…VSQQ. The segment at 3189–3500 is stalk; the sequence is EKRSELEEQQ…KTSETFKNQM (312 aa). K3480 is subject to N6-acetyllysine. 2 AAA regions span residues 3553–3782 and 4005–4221; these read LSNA…EVTR and AHMF…TVDT. Phosphoserine is present on S4162. N6-acetyllysine is present on K4283. At T4366 the chain carries Phosphothreonine. Phosphoserine is present on S4368.

This sequence belongs to the dynein heavy chain family. In terms of assembly, homodimer. The cytoplasmic dynein 1 complex consists of two catalytic heavy chains (HCs) and a number of non-catalytic subunits presented by intermediate chains (ICs), light intermediate chains (LICs) and light chains (LCs); the composition seems to vary in respect to the IC, LIC and LC composition. The heavy chain homodimer serves as a scaffold for the probable homodimeric assembly of the respective non-catalytic subunits. The ICs and LICs bind directly to the HC dimer and dynein LCs assemble on the IC dimer. Interacts with DYNC1LI1; DYNC1LI1 and DYNC1LI2 bind mutually exclusive to DYNC1H1. Interacts with DYNC1LI2; DYNC1LI1 and DYNC1LI2 bind mutually exclusive to DYNC1H1. Interacts with DYNC1I2. Interacts with BICD2. Interacts with isoform 2 of CRACR2A. Interacts with DNALI1.

It is found in the cytoplasm. The protein localises to the cytoskeleton. Its function is as follows. Cytoplasmic dynein 1 acts as a motor for the intracellular retrograde motility of vesicles and organelles along microtubules. Dynein has ATPase activity; the force-producing power stroke is thought to occur on release of ADP. Plays a role in mitotic spindle assembly and metaphase plate congression. The polypeptide is Cytoplasmic dynein 1 heavy chain 1 (Homo sapiens (Human)).